We begin with the raw amino-acid sequence, 635 residues long: Moesin/ezrin/radixin homolog 2 (635 aa).

One can recognise an FERM domain in the interval L12–R305.

In terms of assembly, interacts with Moe and arm at the adherens junction. Forms a complex with Kibra and Ex. Interacts (via FERM domain) with Sav (via FBM motif). Interacts with Schip1. As to expression, expressed predominantly in the germline. Expressed in the developing oocyte from stage 6 to the end of oogenesis and in the apical ends of follical cells from stage 10. Ubiquitous expression throughout embryogenesis with enhanced expression in mesoderm of early embryos and midgut of late embryos. In embryonic CNS, expression is seen in neuropil and developing brain and is enhanced in neuronal cell bodies. In embryonic PNS, expression is seen within the cell body. In third instar larvae, expression is uniform in the eye imaginal disk and is enhanced at the morphogenetic furrow. In pupal eyes, expression is seen in the cytoplasm of secondary and tertiary pigment cells, bristle precursor cells and rhabdomeres.

Its subcellular location is the cell junction. The protein localises to the adherens junction. It localises to the cell membrane. It is found in the cytoplasm. The protein resides in the cytoskeleton. Its subcellular location is the apical cell membrane. The protein localises to the cell projection. It localises to the rhabdomere. In terms of biological role, regulator of the Hippo/SWH (Sav/Wts/Hpo) signaling pathway, a signaling pathway that plays a pivotal role in organ size control and tumor suppression by restricting proliferation and promoting apoptosis. The core of this pathway is composed of a kinase cascade wherein Hippo (Hpo), in complex with its regulatory protein Salvador (Sav), phosphorylates and activates Warts (Wts) in complex with its regulatory protein Mats, which in turn phosphorylates and inactivates the Yorkie (Yki) oncoprotein. Mer acts synergistically along with Ex and Kibra to regulate the Hippo signaling pathway. The protein is Moesin/ezrin/radixin homolog 2 (Mer) of Drosophila melanogaster (Fruit fly).